Here is a 269-residue protein sequence, read N- to C-terminus: 4-hydroxy-tetrahydrodipicolinate reductase (269 aa).

NAD(+) contacts are provided by residues 10-15 (GANGRM), E36, 99-101 (GTT), and 123-126 (AANF). H156 functions as the Proton donor/acceptor in the catalytic mechanism. H157 contacts (S)-2,3,4,5-tetrahydrodipicolinate. K160 (proton donor) is an active-site residue. Residue 166–167 (GT) coordinates (S)-2,3,4,5-tetrahydrodipicolinate.

The protein belongs to the DapB family.

It localises to the cytoplasm. It carries out the reaction (S)-2,3,4,5-tetrahydrodipicolinate + NAD(+) + H2O = (2S,4S)-4-hydroxy-2,3,4,5-tetrahydrodipicolinate + NADH + H(+). The catalysed reaction is (S)-2,3,4,5-tetrahydrodipicolinate + NADP(+) + H2O = (2S,4S)-4-hydroxy-2,3,4,5-tetrahydrodipicolinate + NADPH + H(+). Its pathway is amino-acid biosynthesis; L-lysine biosynthesis via DAP pathway; (S)-tetrahydrodipicolinate from L-aspartate: step 4/4. In terms of biological role, catalyzes the conversion of 4-hydroxy-tetrahydrodipicolinate (HTPA) to tetrahydrodipicolinate. This is 4-hydroxy-tetrahydrodipicolinate reductase from Neisseria meningitidis serogroup A / serotype 4A (strain DSM 15465 / Z2491).